A 91-amino-acid polypeptide reads, in one-letter code: Probable Fe(2+)-trafficking protein (91 aa).

This sequence belongs to the Fe(2+)-trafficking protein family.

Its function is as follows. Could be a mediator in iron transactions between iron acquisition and iron-requiring processes, such as synthesis and/or repair of Fe-S clusters in biosynthetic enzymes. This Tolumonas auensis (strain DSM 9187 / NBRC 110442 / TA 4) protein is Probable Fe(2+)-trafficking protein.